The primary structure comprises 738 residues: Polyribonucleotide nucleotidyltransferase (738 aa).

Positions 514 and 520 each coordinate Mg(2+). A KH domain is found at 580–639 (PRIITVKIPVDKIGEVIGPKGKMINQIQEDTGAEITIEDDGTIYIGAQVGSQAEAARATI). The S1 motif domain occupies 651–723 (GERYLGTVVK…SRGKLSLIPV (73 aa)).

The protein belongs to the polyribonucleotide nucleotidyltransferase family. Mg(2+) serves as cofactor.

The protein localises to the cytoplasm. It catalyses the reaction RNA(n+1) + phosphate = RNA(n) + a ribonucleoside 5'-diphosphate. In terms of biological role, involved in mRNA degradation. Catalyzes the phosphorolysis of single-stranded polyribonucleotides processively in the 3'- to 5'-direction. The polypeptide is Polyribonucleotide nucleotidyltransferase (Streptomyces avermitilis (strain ATCC 31267 / DSM 46492 / JCM 5070 / NBRC 14893 / NCIMB 12804 / NRRL 8165 / MA-4680)).